The sequence spans 526 residues: Collagen alpha-2(I) chain (526 aa).

Residues 1-291 (GFPGEKGPSG…PRSPPSLRPK (291 aa)) form a disordered region. Composition is skewed to low complexity over residues 9–36 (SGEA…LGLP), 44–81 (LPGV…NGAP), and 110–131 (YPGN…SVGP). Positions 165–176 (RGDKGEPGDKGP) are enriched in basic and acidic residues. The segment covering 249-261 (AGPPGPPGPPGPP) has biased composition (pro residues). Positions 263–526 (ASGGGYDFGY…YVDVGPVCFK (264 aa)) are cleaved as a propeptide — C-terminal propeptide. The Fibrillar collagen NC1 domain occupies 293 to 526 (YEVDATLKSL…YVDVGPVCFK (234 aa)). Cystine bridges form between Cys-323–Cys-355, Cys-363–Cys-524, and Cys-432–Cys-477. Ca(2+)-binding residues include Asp-341, Asn-343, Gln-344, Cys-346, and Asp-349.

It belongs to the fibrillar collagen family. Trimers of one alpha 2(I) and two alpha 1(I) chains. Interacts (via C-terminus) with TMEM131 (via PapD-L domain); the interaction is direct and is involved in assembly and TRAPPIII ER-to-Golgi transport complex-dependent secretion of collagen. In terms of processing, prolines at the third position of the tripeptide repeating unit (G-X-Y) are hydroxylated in some or all of the chains. As to expression, forms the fibrils of tendon, ligaments and bones. In bones the fibrils are mineralized with calcium hydroxyapatite.

It is found in the secreted. The protein localises to the extracellular space. The protein resides in the extracellular matrix. Functionally, type I collagen is a member of group I collagen (fibrillar forming collagen). This Oryctolagus cuniculus (Rabbit) protein is Collagen alpha-2(I) chain (COL1A2).